The chain runs to 375 residues: Kininogen (375 aa).

Positions 1-23 are cleaved as a signal peptide; that stretch reads MKLGVRLCVLVVFSLQLWGPGQG. Cystatin kininogen-type domains follow at residues 35–139 and 156–260; these read CDDK…VEAP and VESE…GPLD. Residue asparagine 74 is glycosylated (N-linked (GlcNAc) asparagine). 4 disulfides stabilise this stretch: cysteine 91-cysteine 102, cysteine 115-cysteine 133, cysteine 211-cysteine 223, and cysteine 234-cysteine 254. Residue asparagine 235 is glycosylated (N-linked (GlcNAc) asparagine). The disordered stretch occupies residues 283–375; the sequence is EVKTTQASTA…LSDLDLLGKK (93 aa).

N-glycosylated, with sialylated biantennary complex-type glycans. Post-translationally, O-glycosylated, sialylated oligosaccharides. In terms of processing, bradykinin is released from kininogen by kallikrein. The N-terminus is blocked. Expressed in the skin, liver, intestine, spleen, pancreas and kidney.

Its subcellular location is the cytoplasm. It localises to the vacuole. Its function is as follows. Inhibits papain and ficin (cysteine proteinases) but not trypsin (a serine proteinase). In Salmo salar (Atlantic salmon), this protein is Kininogen (LOC106584303).